The chain runs to 427 residues: Glutamate-1-semialdehyde 2,1-aminomutase (427 aa).

Residue K265 is modified to N6-(pyridoxal phosphate)lysine.

It belongs to the class-III pyridoxal-phosphate-dependent aminotransferase family. HemL subfamily. In terms of assembly, homodimer. It depends on pyridoxal 5'-phosphate as a cofactor.

The protein resides in the cytoplasm. The catalysed reaction is (S)-4-amino-5-oxopentanoate = 5-aminolevulinate. Its pathway is porphyrin-containing compound metabolism; protoporphyrin-IX biosynthesis; 5-aminolevulinate from L-glutamyl-tRNA(Glu): step 2/2. In Burkholderia orbicola (strain MC0-3), this protein is Glutamate-1-semialdehyde 2,1-aminomutase.